We begin with the raw amino-acid sequence, 232 residues long: Charged multivesicular body protein 4c (232 aa).

2 disordered regions span residues 1 to 23 (MSKL…PSAQ) and 172 to 232 (EQEE…AWAT). The segment at 1–153 (MSKLGKFFKG…EISEAFSQRV (153 aa)) is intramolecular interaction with C-terminus. The span at 11 to 23 (SRSSRARAAPSAQ) shows a compositional bias: low complexity. Coiled coils occupy residues 21–50 (SAQE…IQRE) and 125–182 (LNKI…KMTS). Residues 154–232 (QFADGFDEDE…DFKQLAAWAT (79 aa)) form an intramolecular interaction with N-terminus region. S210 is modified (phosphoserine; by AURKB).

This sequence belongs to the SNF7 family. Probable core component of the endosomal sorting required for transport complex III (ESCRT-III). ESCRT-III components are thought to multimerize to form a flat lattice on the perimeter membrane of the endosome. Several assembly forms of ESCRT-III may exist that interact and act sequentially. Self-associates. Interacts with CHMP2A. Interacts with CHMP4A. Interacts with CHMP4B. Interacts with CHMP6. Interacts with VPS4A. Interacts with PDCD6IP; the interaction is direct. Phosphorylated at Ser-210 by AURKB during cytokinesis: together with ZFYVE19/ANCHR, phosphorylated CHMP4C retains abscission-competent VPS4 (VPS4A and/or VPS4B) at the midbody ring until abscission checkpoint signaling is terminated at late cytokinesis.

The protein localises to the cytoplasm. It is found in the cytosol. It localises to the late endosome membrane. Its subcellular location is the midbody. The protein resides in the midbody ring. In terms of biological role, probable core component of the endosomal sorting required for transport complex III (ESCRT-III) which is involved in multivesicular bodies (MVBs) formation and sorting of endosomal cargo proteins into MVBs. MVBs contain intraluminal vesicles (ILVs) that are generated by invagination and scission from the limiting membrane of the endosome and mostly are delivered to lysosomes enabling degradation of membrane proteins, such as stimulated growth factor receptors, lysosomal enzymes and lipids. The MVB pathway appears to require the sequential function of ESCRT-O, -I,-II and -III complexes. ESCRT-III proteins mostly dissociate from the invaginating membrane before the ILV is released. The ESCRT machinery also functions in topologically equivalent membrane fission events, such as the terminal stages of cytokinesis. Key component of the cytokinesis checkpoint, a process required to delay abscission to prevent both premature resolution of intercellular chromosome bridges and accumulation of DNA damage: upon phosphorylation by AURKB, together with ZFYVE19/ANCHR, retains abscission-competent VPS4 (VPS4A and/or VPS4B) at the midbody ring until abscission checkpoint signaling is terminated at late cytokinesis. Deactivation of AURKB results in dephosphorylation of CHMP4C followed by its dissociation from ANCHR and VPS4 and subsequent abscission. ESCRT-III proteins are believed to mediate the necessary vesicle extrusion and/or membrane fission activities, possibly in conjunction with the AAA ATPase VPS4. CHMP4A/B/C are required for the exosomal release of SDCBP, CD63 and syndecan. This Rattus norvegicus (Rat) protein is Charged multivesicular body protein 4c (Chmp4c).